A 323-amino-acid chain; its full sequence is Prostaglandin F synthase 1 (323 aa).

Residues 20–24 and Asp50 each bind NADP(+); that span reads GFGTY. The active-site Proton donor is Tyr55. Residue His117 coordinates substrate. NADP(+) is bound by residues 166 to 167, Gln190, 216 to 221, and 270 to 280; these read SN, YAALGA, and KSFNKKRIKEN.

Belongs to the aldo/keto reductase family. As to quaternary structure, monomer. The N-terminus is blocked.

It localises to the cytoplasm. The enzyme catalyses prostaglandin F2alpha + NADP(+) = prostaglandin D2 + NADPH + H(+). The protein operates within lipid metabolism; prostaglandin biosynthesis. Its function is as follows. Catalyzes the reduction of PGD(2) and PGH(2) to PGF(2 alpha) and a stereoisomer, respectively. It has a broad substrate specificity and also reduces other carbonyl compounds. The protein is Prostaglandin F synthase 1 of Bos taurus (Bovine).